Consider the following 38-residue polypeptide: Large ribosomal subunit protein bL36A (38 aa).

This sequence belongs to the bacterial ribosomal protein bL36 family.

The chain is Large ribosomal subunit protein bL36A from Enterobacter sp. (strain 638).